A 177-amino-acid chain; its full sequence is MSRVAKAPVVVPAGVTITLSGQDITVKGPIGELSRTIHSDVVVSQEENNIITNIVADVKGAWAQAGTTRALINNMVEGVSKGFEKKLVLQGVGYRAKAAGKSLDLSLGFSHPIKHAIPEGITCETPSQTEVTLKGCDKHLVGQTAANIRAYRKPEPYKGKGVRYVDEYVRRKEAKKK.

It belongs to the universal ribosomal protein uL6 family. In terms of assembly, part of the 50S ribosomal subunit.

Functionally, this protein binds to the 23S rRNA, and is important in its secondary structure. It is located near the subunit interface in the base of the L7/L12 stalk, and near the tRNA binding site of the peptidyltransferase center. The protein is Large ribosomal subunit protein uL6 of Colwellia psychrerythraea (strain 34H / ATCC BAA-681) (Vibrio psychroerythus).